The primary structure comprises 645 residues: 1,4-alpha-glucan branching enzyme GlgB (645 aa).

D309 functions as the Nucleophile in the catalytic mechanism. E352 acts as the Proton donor in catalysis. Residues 619–645 (VKTRKGSKKQDGSKTKVRSNVTSRGKR) are disordered. Residues 636–645 (RSNVTSRGKR) are compositionally biased toward polar residues.

The protein belongs to the glycosyl hydrolase 13 family. GlgB subfamily. In terms of assembly, monomer.

The enzyme catalyses Transfers a segment of a (1-&gt;4)-alpha-D-glucan chain to a primary hydroxy group in a similar glucan chain.. It participates in glycan biosynthesis; glycogen biosynthesis. Catalyzes the formation of the alpha-1,6-glucosidic linkages in glycogen by scission of a 1,4-alpha-linked oligosaccharide from growing alpha-1,4-glucan chains and the subsequent attachment of the oligosaccharide to the alpha-1,6 position. The chain is 1,4-alpha-glucan branching enzyme GlgB from Bacillus cereus (strain ATCC 10987 / NRS 248).